Here is a 73-residue protein sequence, read N- to C-terminus: UPF0057 membrane protein At4g30650 (73 aa).

A run of 2 helical transmembrane segments spans residues 4 to 24 (NMEV…GVCL) and 37 to 57 (LVLT…VIVF).

This sequence belongs to the UPF0057 (PMP3) family.

The protein localises to the membrane. In Arabidopsis thaliana (Mouse-ear cress), this protein is UPF0057 membrane protein At4g30650.